The following is a 223-amino-acid chain: Thiamine-phosphate synthase (223 aa).

4-amino-2-methyl-5-(diphosphooxymethyl)pyrimidine contacts are provided by residues 42-46 (QLRDK) and asparagine 83. Residues aspartate 84 and aspartate 103 each contribute to the Mg(2+) site. Serine 122 lines the 4-amino-2-methyl-5-(diphosphooxymethyl)pyrimidine pocket. 148 to 150 (TPT) provides a ligand contact to 2-[(2R,5Z)-2-carboxy-4-methylthiazol-5(2H)-ylidene]ethyl phosphate. Lysine 151 provides a ligand contact to 4-amino-2-methyl-5-(diphosphooxymethyl)pyrimidine. Glycine 179 serves as a coordination point for 2-[(2R,5Z)-2-carboxy-4-methylthiazol-5(2H)-ylidene]ethyl phosphate.

It belongs to the thiamine-phosphate synthase family. It depends on Mg(2+) as a cofactor.

It catalyses the reaction 2-[(2R,5Z)-2-carboxy-4-methylthiazol-5(2H)-ylidene]ethyl phosphate + 4-amino-2-methyl-5-(diphosphooxymethyl)pyrimidine + 2 H(+) = thiamine phosphate + CO2 + diphosphate. The catalysed reaction is 2-(2-carboxy-4-methylthiazol-5-yl)ethyl phosphate + 4-amino-2-methyl-5-(diphosphooxymethyl)pyrimidine + 2 H(+) = thiamine phosphate + CO2 + diphosphate. The enzyme catalyses 4-methyl-5-(2-phosphooxyethyl)-thiazole + 4-amino-2-methyl-5-(diphosphooxymethyl)pyrimidine + H(+) = thiamine phosphate + diphosphate. The protein operates within cofactor biosynthesis; thiamine diphosphate biosynthesis; thiamine phosphate from 4-amino-2-methyl-5-diphosphomethylpyrimidine and 4-methyl-5-(2-phosphoethyl)-thiazole: step 1/1. Its function is as follows. Condenses 4-methyl-5-(beta-hydroxyethyl)thiazole monophosphate (THZ-P) and 2-methyl-4-amino-5-hydroxymethyl pyrimidine pyrophosphate (HMP-PP) to form thiamine monophosphate (TMP). The chain is Thiamine-phosphate synthase from Mycolicibacterium paratuberculosis (strain ATCC BAA-968 / K-10) (Mycobacterium paratuberculosis).